Reading from the N-terminus, the 351-residue chain is Fe(3+) ions import ATP-binding protein FbpC (351 aa).

The 231-residue stretch at 7-237 (VELKNVTKRF…PASEFMASFM (231 aa)) folds into the ABC transporter domain. 39 to 46 (GPSGCGKT) contacts ATP.

It belongs to the ABC transporter superfamily. Fe(3+) ion importer (TC 3.A.1.10) family. In terms of assembly, the complex is composed of two ATP-binding proteins (FbpC), two transmembrane proteins (FbpB) and a solute-binding protein (FbpA).

It localises to the cell inner membrane. The catalysed reaction is Fe(3+)(out) + ATP + H2O = Fe(3+)(in) + ADP + phosphate + H(+). Part of the ABC transporter complex FbpABC involved in Fe(3+) ions import. Responsible for energy coupling to the transport system. The chain is Fe(3+) ions import ATP-binding protein FbpC from Photorhabdus laumondii subsp. laumondii (strain DSM 15139 / CIP 105565 / TT01) (Photorhabdus luminescens subsp. laumondii).